A 287-amino-acid chain; its full sequence is Protease HtpX (287 aa).

A run of 2 helical transmembrane segments spans residues 4–24 (VFLLIATNLAILLVASIVMSI) and 33–53 (GGLLVFAAIFGFGGSFISLAI). H139 lines the Zn(2+) pocket. E140 is an active-site residue. H143 contributes to the Zn(2+) binding site. 2 helical membrane passes run 154–174 (LIQGVVNTFVIFAARVVAGII) and 195–215 (GVVFVLDMLFGILASIIVAYF). E220 serves as a coordination point for Zn(2+).

It belongs to the peptidase M48B family. Zn(2+) is required as a cofactor.

Its subcellular location is the cell inner membrane. The sequence is that of Protease HtpX from Shewanella denitrificans (strain OS217 / ATCC BAA-1090 / DSM 15013).